Consider the following 595-residue polypeptide: MYRPDHVFVILCAVFFTGQVTAVPAGTGITHPHSPQLGPFEPVGFASQTQTQLAPSRGPFTWLRDSVIERIWGIDKEKQSLSKPGPRPVPEKSWSRYGSDIVLRIEVHNAEEVEALAEAVNILFLDVWDSNENYVDIRLAKEVVPSLLGLLPQSLQKTHTLLIEDLSKMIYESQYPSRGFKHHKNDQTTRHTGFQSSDVGDLFFDNYQPFPVILQWMRLLVSMFPSHVQLINVGVTHEGRDIPAFRLGARPSGDQNEEPRKTVMIVGGSHAREWISTSTVAYIAFQLITEFGNSPPITKLLEDFDWILVPTINPDGYVYSWDMDRLWRKNRQQTGLPFCPGIDLDRSWGYEWDGQGTRANPCSESYAGNNAFDSMETRTIAEWAYNQTQNKQSDFVGFLDLHSYSQQILYPYSYSCSTVPPTLENLEELAFGIAKAIRMTNQETYVVKSACEGVVTTEKGTGQRVSTNVESTGGSALDWFYHQLHAKYSYQIKLRDKGMYGFLLPPENIVPTGREIFNSVLVLGHFLLGEGANGLEWSFLSGSGSAAGKEDDSSRTFDRLFFDNNEEQLEKSADDRDYFSVVEEDVYQDEGWGLW.

A signal peptide spans 1 to 22; that stretch reads MYRPDHVFVILCAVFFTGQVTA. A propeptide spanning residues 23 to 178 is cleaved from the precursor; that stretch reads VPAGTGITHP…MIYESQYPSR (156 aa). The 322-residue stretch at 206–527 folds into the Peptidase M14 domain; it reads NYQPFPVILQ…NSVLVLGHFL (322 aa). Zn(2+)-binding residues include H270 and E273. Residues 270–273, R328, and 345–346 contribute to the substrate site; these read HARE and DR. C339 and C362 are disulfide-bonded. N-linked (GlcNAc...) asparagine glycosylation occurs at N386. H402 contributes to the Zn(2+) binding site. 403–404 lines the substrate pocket; that stretch reads SY.

It belongs to the peptidase M14 family. Zn(2+) is required as a cofactor.

It is found in the vacuole. Its subcellular location is the secreted. Its function is as follows. Inactive carboxypeptidase that may play a role in cell wall organization and biogenesis. This is Inactive metallocarboxypeptidase ecm14 (ecm14) from Talaromyces marneffei (strain ATCC 18224 / CBS 334.59 / QM 7333) (Penicillium marneffei).